We begin with the raw amino-acid sequence, 2122 residues long: Pecanex-like protein 2 (2122 aa).

2 consecutive transmembrane segments (helical) span residues 36–53 and 60–82; these read LYLWLFLLLLPLALHLAF and ALFYCGSVTIFFAVIKLISYRLH. Disordered regions lie at residues 92 to 164 and 180 to 250; these read QHRS…ELPA and QPEA…LVNP. Composition is skewed to polar residues over residues 146–157 and 185–203; these read SRGQSVHSQHSS and ASSTSPGMKSESLPASQGR. N288 is a glycosylation site (N-linked (GlcNAc...) asparagine). 2 stretches are compositionally biased toward low complexity: residues 392–407 and 458–476; these read VTSSDRTSVRSSAESA and PDRCSGSGPGDGSPTPGST. 2 disordered regions span residues 392 to 556 and 575 to 634; these read VTSS…QIPN and VVAP…PVFT. Over residues 528 to 538 the composition is skewed to basic and acidic residues; that stretch reads STKEVVSDGEK. An N-linked (GlcNAc...) asparagine glycan is attached at N556. The segment covering 599 to 618 has biased composition (basic and acidic residues); that stretch reads TKEEAVENEKPNGRDPKPGK. Polar residues predominate over residues 625-634; sequence DPANGSPVFT. 13 helical membrane passes run 825-845, 849-869, 882-902, 933-953, 976-998, 1010-1030, 1080-1100, 1105-1125, 1174-1194, 1218-1238, 1245-1265, 1270-1290, and 1305-1325; these read VAVLLSVLVSLLGFLTLNRGF, LWVLLFCLVMASCQYSLLKSV, QIIAYSRPIYFCMLCSLILLL, HLIVFLCCFPAISLLGLFPQI, GITSAVYSVGRSVLAAALLHAFC, HIPALFSAFCGLLVALSYHLS, LVICSAAAVLSFAVSASTVFL, FLSIVLFALAGTVGLITHHLL, YLLYPAIVLNALTLDAFSISN, SFCNPVHQFANLGFTVIFFHF, ESFLLDFFMVSIVFTKLGDLL, FVLAYVAPWQMAWGSSFHVFA, and TFATSIFSTPLSPFLGSVIFI. N-linked (GlcNAc...) asparagine glycosylation is found at N1393, N1534, and N1802. Disordered stretches follow at residues 1858–1943 and 1955–1991; these read SVGQ…SSGP and STSVHELAQRPSGSRLSLHTSAASLHSQPPPVTTTGH. The span at 1888 to 1898 shows a compositional bias: basic and acidic residues; it reads ESRDGSTEQPR. The span at 1922–1942 shows a compositional bias: polar residues; that stretch reads SQSVQAHSAISQRPPTLSSSG. The segment covering 1968-1981 has biased composition (low complexity); that stretch reads SRLSLHTSAASLHS. N2039 carries N-linked (GlcNAc...) asparagine glycosylation. The disordered stretch occupies residues 2097-2122; the sequence is VLCRRASQEDMGLDDTASQQSTSDEQ. The segment covering 2112 to 2122 has biased composition (polar residues); the sequence is TASQQSTSDEQ.

The protein belongs to the pecanex family.

The protein resides in the membrane. Functionally, may play a role in tumorigenesis. This Mus musculus (Mouse) protein is Pecanex-like protein 2.